A 262-amino-acid chain; its full sequence is Type III pantothenate kinase (262 aa).

6–13 contributes to the ATP binding site; sequence DVGNTNAV. Residues Tyr-100 and 107–110 each bind substrate; that span reads GADR. The active-site Proton acceptor is the Asp-109. Residue Asp-129 coordinates K(+). Thr-132 is an ATP binding site. Substrate is bound at residue Thr-184.

This sequence belongs to the type III pantothenate kinase family. In terms of assembly, homodimer. The cofactor is NH4(+). K(+) is required as a cofactor.

The protein localises to the cytoplasm. The enzyme catalyses (R)-pantothenate + ATP = (R)-4'-phosphopantothenate + ADP + H(+). Its pathway is cofactor biosynthesis; coenzyme A biosynthesis; CoA from (R)-pantothenate: step 1/5. In terms of biological role, catalyzes the phosphorylation of pantothenate (Pan), the first step in CoA biosynthesis. This Bacillus cereus (strain B4264) protein is Type III pantothenate kinase.